The sequence spans 2477 residues: MDPSGVKVLETAEDIQERRQQVLDRYHRFKELSSLRRQKLEDSYRFQFFQRDADELGKWIQEKLQIASDENYKDPSNLQGKLQKHQAFEAEVQANSGAIVKLDETGNQMINEGHFASETIRTRLQELHRLWELLLEKMREKGVKLLQAQKLVQFLRECEDVMDWINDKEAIVTSEELGQDLEHVEVLQKKFEEFQTDLAAHEERVNEVNQFAGKLIQEQHPEEELIKSKQDEVNASWQRLKGLAQQRQGKLFGAAEVQRFNRDVDETISWIKEKGQLMASDDFGRDLASVQALLRKHEGLERDLAAFHHKVKALCAEADRLQQSHPINASQIQVKREELIANWEQIRTLAAERHARLNDSYRLQRFLADFRDLTSWVTEMKALINADELANDVAGAEALLDRHQEHKGEIDAHEDSFRSADESGQALLAAGHYASDEVKEKLTILSDERSALLELWELRRQQYEQCMDLQLFYRDTEQVDNWMSKQEAFLLNEDLGDSLDSVEALLKKHEDFEKSLSAQEEKITALDEFATKLIQNNHYAMDDVATRRDALLSRRNALHERAMKRRAQLADSFHLQQFFRDSDELKSWVNEKMKTATDEAYKDPSNLQGKVQKHQAFEAELSANQSRIDALEKAGQKLIDVNHYASDEVAARMNEVISLWKKLLEATELKGIKLREANQQQQFNRNVEDIELWLYEVEGHLASDDYGKDLTSVQNLQKKHALLEADVAAHQDPIDGITIQARQFQDAGHFDADNIKKKQEALVARYEALKDPMVARKQKLADSLRLQQLFRDIEDEETWIREKEPIAASTNRGKDLIGVQNLLKKHQALQAEIAGHEPRIKAVTQKGNAMVEEGHFAAEDVKIKLNELNQKWDSLKAKASQRRQDLEDSLQAQQYFADANEAQSWMREKEPIVGSTDYGKDEDSAEALLKKHEALMSDLSAYGSSIQALREQAQSCRQQVAPTDDETGKELVLALYDYQEKSPREVTMKKGDILTLLNSTNKDWWKVEVNDRQGFVPAAYVKKLDPAQSASRENLLEEQGSIALRQEQIDNQTLITKEVGSVSLRMKQVEELYHSLLELGEKRKGMLEKSCKKFMLFREANELQQWINEKEAALTNEEVGADLEQVEVLQKKFDDFQKDLKANESRLKDINKVANDLESEGLMAEEVQAVEHQEVYGMMPRDETDSKTVSPWKSARMMVHTVATFNSIKELNERWRSLQQLAEERSQLLGSADEVQRFHRDADETKEWIEEKNQALNTDNYGHDLASVQALQRNDEGFERDLAALGDKVNSLGETAQRLIQSHPELAEDLQEKCTELNQAWSSLGKRADQRKEKLGDSHDLQRFLSDFRDLMSWINGIRGLVSSDELAKDVTGAEALLERHQEHRTEIDARAGTFQAFEQFGQQLLARGHYASPEIKEKLDILDQERTDLEKAWVQRRMMLDQCLELQLFHRDCEQAENWMAAREAFLNTEDKGDSLDSVEALIKKHEDFDKAINVQEEKIAVLQSFADQLIAADHYAKGVIANRRNEVLDRWRRLKAQMIEKRSKLGESQTLQQFSRDVDEIEAWISEKLQTASDESYKDPTNIQLSKLLSKHQKHQAFEAELHANADRIRGVIEMGNPLIERGACAGSEDAVKARLAALADQWEFLVQKSSEKSQKLKEANKQQNFNTGIKDFDFWLSEVEALLASEDYGKDLASVNNLLKKHQLLEADISAHEDRLKDLNSQADSLMTSSAFDTSQVKDKRETINGRFQRIKSMAAARRAKLNESHRLHQFFRDMDDEESWIKEKKLLVSSEDYGRDLTGVQNLRKKHKRLEAELAAHEPAIQGVLDTGKKLSDDNTIGKEEIQQRLAQFVDHWKELKQLAAARGQRLEESLEYQQFVANVEEEEAWINEKMTLVASEDYGDTLAAIQGLLKKHEAFETDFTVHKDRVNDVCANGEDLIKKNNHHVENITAKMKGLKGKVSDLEKAAAQRKAKLDENSAFLQFNWKADVVESWIGEKENSLKTDDYGRDLSSVQTLLTKQETFDAGLQAFQQEGIANITALKDQLLAAKHIQSKAIEVRHASLMKRWNQLLANSAARKKKLLEAQEHFRKVEDLFLTFAKKASAFNSWFENAEEDLTDPVRCNSLEEIKALREAHDAFRSSLSSAQADFNQLAELDRQIKSFRVASNPYTWFTMEALEETWRNLQKIIKERELELQKEQRRQEENDKLRQEFAQHANAFHQWIQETRTYLLDGSCMVEESGTLESQLEATKRKHQEIRAMRSQLKKIEDLGAAMEEALILDNKYTEHSTVGLAQQWDQLDQLGMRMQHNLEQQIQARNTTGVTEEALKEFSMMFKHFDKDKSGRLNHQEFKSCLRSLGYDLPMVEEGEPDPEFESILDTVDPNRDGHVSLQEYMAFMISRETENVKSSEEIESAFRALSSERKPYVTKEELYQNLTREQADYCISHMKPYMDGKGRELPSAYDYIEFTRSLFVN.

Residues 1-14 are N-terminal domain; it reads MDPSGVKVLETAED. 10 Spectrin repeats span residues 45-146, 150-251, 256-358, 361-465, 468-570, 574-676, 679-781, 785-888, 891-969, and 1096-1162; these read RFQF…VKLL, KLVQ…QGKL, EVQR…ARLN, YRLQ…QYEQ, DLQL…AQLA, HLQQ…KLRE, QQQQ…QKLA, RLQQ…DLED, QAQQ…ETGK, and LFRE…SEGL. An SH3 domain is found at 967 to 1026; sequence TGKELVLALYDYQEKSPREVTMKKGDILTLLNSTNKDWWKVEVNDRQGFVPAAYVKKLDP. Tyr-1176 carries the phosphotyrosine modification. Spectrin repeat units lie at residues 1234–1336, 1339–1442, 1446–1549, 1552–1661, 1664–1767, 1769–1873, 1876–1979, 1983–2086, 2097–2199, and 2211–2315; these read EVQR…EKLG, HDLQ…MMLD, ELQL…KLGE, TLQQ…KLKE, KQQN…KLNE, HRLH…RLEE, EYQQ…KLDE, FLQF…KLLE, LFLT…LELQ, and LRQE…NLEQ. Residues 2257-2477 are C-terminal domain; the sequence is HQEIRAMRSQ…IEFTRSLFVN (221 aa). EF-hand domains lie at 2328 to 2363, 2371 to 2406, and 2409 to 2444; these read EALKEFSMMFKHFDKDKSGRLNHQEFKSCLRSLGYD, EPDPEFESILDTVDPNRDGHVSLQEYMAFMISRETE, and KSSEEIESAFRALSSERKPYVTKEELYQNLTREQAD. Ca(2+) contacts are provided by Asp-2341, Asp-2343, Ser-2345, Arg-2347, Glu-2352, Asp-2384, Asn-2386, Asp-2388, His-2390, and Glu-2395.

This sequence belongs to the spectrin family. In terms of assembly, like erythrocyte spectrin, the spectrin-like proteins are capable of forming dimers which can further associate to tetramers. Interacts with ACP1. In terms of processing, phosphorylation of Tyr-1176 decreases sensitivity to cleavage by calpain in vitro.

The protein resides in the cytoplasm. Its subcellular location is the cytoskeleton. The protein localises to the cell cortex. Morphologically, spectrin-like proteins appear to be related to spectrin, showing a flexible rod-like structure. They can bind actin but seem to differ in their calmodulin-binding activity. In nonerythroid tissues, spectrins, in association with some other proteins, may play an important role in membrane organization. This is Spectrin alpha chain, non-erythrocytic 1 (SPTAN1) from Gallus gallus (Chicken).